The sequence spans 60 residues: Sperm protamine P1 (60 aa).

The interval M1 to Y60 is disordered.

The protein belongs to the protamine P1 family. Testis.

It is found in the nucleus. Its subcellular location is the chromosome. In terms of biological role, protamines substitute for histones in the chromatin of sperm during the haploid phase of spermatogenesis. They compact sperm DNA into a highly condensed, stable and inactive complex. The protein is Sperm protamine P1 (PRM1) of Osphranter rufus (Red kangaroo).